The primary structure comprises 395 residues: Syncephapepsin (395 aa).

The N-terminal stretch at 1–19 (MKFSLALLATVALATISQA) is a signal peptide. A propeptide spans 20 to 71 (APVEKQVAGKPFQLVKNPHYQANATRAIFRAEKKYARHTAIPEQGKTIVKSA) (activation peptide). Residues 89 to 391 (YYATVSVGTP…NQGVPEVQIA (303 aa)) enclose the Peptidase A1 domain. Residue Asp107 is part of the active site. An intrachain disulfide couples Cys120 to Cys123. Asp288 is a catalytic residue. A disulfide bond links Cys322 and Cys355.

This sequence belongs to the peptidase A1 family. As to quaternary structure, monomer.

Hydrolysis of proteins with a broad specificity. Residues recognized to be cleaved were primarily those of trypsin and chymotrypsin and Lys was the most susceptible. This Syncephalastrum racemosum (Filamentous fungus) protein is Syncephapepsin (SPSR).